The sequence spans 46 residues: Protein PsbN (46 aa).

Residues 7-27 (GLSIAITFAVILLALTGFSIY) form a helical membrane-spanning segment.

Belongs to the PsbN family.

It localises to the cellular thylakoid membrane. May play a role in photosystem I and II biogenesis. The polypeptide is Protein PsbN (Synechococcus elongatus (strain ATCC 33912 / PCC 7942 / FACHB-805) (Anacystis nidulans R2)).